Here is a 152-residue protein sequence, read N- to C-terminus: Phosphoribosyl-AMP cyclohydrolase (152 aa).

D92 provides a ligand contact to Mg(2+). Position 93 (C93) interacts with Zn(2+). Residues D94 and D96 each coordinate Mg(2+). Positions 111 and 118 each coordinate Zn(2+).

Belongs to the PRA-CH family. In terms of assembly, homodimer. The cofactor is Mg(2+). Zn(2+) is required as a cofactor.

The protein localises to the cytoplasm. It carries out the reaction 1-(5-phospho-beta-D-ribosyl)-5'-AMP + H2O = 1-(5-phospho-beta-D-ribosyl)-5-[(5-phospho-beta-D-ribosylamino)methylideneamino]imidazole-4-carboxamide. The protein operates within amino-acid biosynthesis; L-histidine biosynthesis; L-histidine from 5-phospho-alpha-D-ribose 1-diphosphate: step 3/9. In terms of biological role, catalyzes the hydrolysis of the adenine ring of phosphoribosyl-AMP. This chain is Phosphoribosyl-AMP cyclohydrolase, found in Sinorhizobium fredii (strain NBRC 101917 / NGR234).